A 280-amino-acid chain; its full sequence is Large ribosomal subunit protein uL2 (280 aa).

Disordered stretches follow at residues 1–25 (MGIR…AEVT) and 230–280 (HPHG…SGRG). The span at 257 to 280 (KTRKRRKPSSKFIIRRRKTASGRG) shows a compositional bias: basic residues.

The protein belongs to the universal ribosomal protein uL2 family. In terms of assembly, part of the 50S ribosomal subunit. Forms a bridge to the 30S subunit in the 70S ribosome.

Its function is as follows. One of the primary rRNA binding proteins. Required for association of the 30S and 50S subunits to form the 70S ribosome, for tRNA binding and peptide bond formation. It has been suggested to have peptidyltransferase activity; this is somewhat controversial. Makes several contacts with the 16S rRNA in the 70S ribosome. This is Large ribosomal subunit protein uL2 from Gloeobacter violaceus (strain ATCC 29082 / PCC 7421).